The chain runs to 415 residues: Esterase FrsA (415 aa).

The segment at 1–23 (MANRNLSESLFKPRQKHQETSTL) is disordered.

It belongs to the FrsA family.

It carries out the reaction a carboxylic ester + H2O = an alcohol + a carboxylate + H(+). Its function is as follows. Catalyzes the hydrolysis of esters. This chain is Esterase FrsA, found in Photorhabdus laumondii subsp. laumondii (strain DSM 15139 / CIP 105565 / TT01) (Photorhabdus luminescens subsp. laumondii).